The chain runs to 198 residues: MATDDVNEPLPAAAELPATEAEKQPHKLERKWSFWFDNQSKKGAAWGASLRKAYTFDTVEDFWGLHETIFQTSKLTANAEIHLFKAGVEPKWEDPECANGGKWTWVVTANRKEALDKGWLETLMALIGEQFDEADEICGVVASVRPQSKQDKLSLWTRTKSNEAVLMGIGKKWKEILDVTDKITFNNHDDSRRSRFTV.

The segment at 1 to 25 (MATDDVNEPLPAAAELPATEAEKQP) is disordered. An N-acetylalanine modification is found at Ala-2. Over residues 8–19 (EPLPAAAELPAT) the composition is skewed to low complexity. MRNA contacts are provided by residues 46–47 (WG) and 92–93 (WE). Cys-97 and Cys-138 are oxidised to a cystine. An mRNA-binding site is contributed by 145–152 (RPQSKQDK).

The protein belongs to the eukaryotic initiation factor 4E family. As to quaternary structure, EIF4F is a multi-subunit complex, the composition of which varies with external and internal environmental conditions. It is composed of at least EIF4A, EIF4E and EIF4G. EIF4E is also known to interact with other partners. In higher plants two isoforms of EIF4F have been identified, named isoform EIF4F and isoform EIF(iso)4F. Isoform EIF4F has subunits p220 and p26, whereas isoform EIF(iso)4F has subunits p82 and p28. This isoform interacts with the viral protein genome linked (VPg)-proteinase of turnip mosaic potyvirus. Interacts directly with LOX2. Interacts with BTF3. Post-translationally, according to the redox status, the Cys-97-Cys-138 disulfide bridge may have a role in regulating protein function by affecting its ability to bind capped mRNA. In terms of tissue distribution, abundant in floral organs and in young developing tissues.

Its function is as follows. Recognizes and binds the 7-methylguanosine-containing mRNA cap during an early step in the initiation of protein synthesis and facilitates ribosome binding by inducing the unwinding of the mRNAs secondary structures. Mediates susceptibility to Turnipmosaic potyvirus (TuMV) and Tobacco etch potyvirus (TEV). The polypeptide is Eukaryotic translation initiation factor isoform 4E (EIF(ISO)4E) (Arabidopsis thaliana (Mouse-ear cress)).